An 872-amino-acid chain; its full sequence is Alanine--tRNA ligase (872 aa).

Histidine 567, histidine 571, cysteine 669, and histidine 673 together coordinate Zn(2+).

Belongs to the class-II aminoacyl-tRNA synthetase family. Zn(2+) is required as a cofactor.

It localises to the cytoplasm. It catalyses the reaction tRNA(Ala) + L-alanine + ATP = L-alanyl-tRNA(Ala) + AMP + diphosphate. In terms of biological role, catalyzes the attachment of alanine to tRNA(Ala) in a two-step reaction: alanine is first activated by ATP to form Ala-AMP and then transferred to the acceptor end of tRNA(Ala). Also edits incorrectly charged Ser-tRNA(Ala) and Gly-tRNA(Ala) via its editing domain. The protein is Alanine--tRNA ligase of Streptococcus pyogenes serotype M2 (strain MGAS10270).